The primary structure comprises 536 residues: Probable galacturonosyltransferase 10 (536 aa).

The Cytoplasmic portion of the chain corresponds to 1–16; it reads MRRRGGDSFRRAGRRK. Residues 17–37 traverse the membrane as a helical; Signal-anchor for type II membrane protein segment; sequence ISNVVWWVLSGIALLLFFLIL. Residues 38–536 are Lumenal-facing; sequence SKAGHIEPRP…SPFMQQCNFH (499 aa). N-linked (GlcNAc...) asparagine glycans are attached at residues Asn-64, Asn-246, Asn-300, Asn-403, and Asn-436.

Belongs to the glycosyltransferase 8 family. In terms of tissue distribution, expressed in roots, inflorescences, siliques, leaves and stems.

The protein localises to the golgi apparatus membrane. The protein operates within glycan metabolism; pectin biosynthesis. In terms of biological role, may be involved in pectin and/or xylans biosynthesis in cell walls. This Arabidopsis thaliana (Mouse-ear cress) protein is Probable galacturonosyltransferase 10 (GAUT10).